Reading from the N-terminus, the 231-residue chain is Potassium/proton antiporter CemA (231 aa).

Transmembrane regions (helical) follow at residues 7 to 27, 104 to 124, 154 to 174, and 189 to 209; these read FIPLLCLTSIVFLPWCISFTF, IHTILHFCTNIICFLILSVYS, ILFLIEFCVGYHSTGGWELMI, and IISFLVSILPAILDTIFKYWI.

This sequence belongs to the CemA family.

The protein resides in the plastid. It is found in the chloroplast inner membrane. It catalyses the reaction K(+)(in) + H(+)(out) = K(+)(out) + H(+)(in). Its function is as follows. Contributes to K(+)/H(+) antiport activity by supporting proton efflux to control proton extrusion and homeostasis in chloroplasts in a light-dependent manner to modulate photosynthesis. Prevents excessive induction of non-photochemical quenching (NPQ) under continuous-light conditions. Indirectly promotes efficient inorganic carbon uptake into chloroplasts. This is Potassium/proton antiporter CemA from Pisum sativum (Garden pea).